The primary structure comprises 138 residues: Phosphoribosyl-AMP cyclohydrolase (138 aa).

Aspartate 86 is a Mg(2+) binding site. Cysteine 87 lines the Zn(2+) pocket. 2 residues coordinate Mg(2+): aspartate 88 and aspartate 90. The Zn(2+) site is built by cysteine 104 and cysteine 111.

It belongs to the PRA-CH family. As to quaternary structure, homodimer. The cofactor is Mg(2+). Requires Zn(2+) as cofactor.

The protein localises to the cytoplasm. It carries out the reaction 1-(5-phospho-beta-D-ribosyl)-5'-AMP + H2O = 1-(5-phospho-beta-D-ribosyl)-5-[(5-phospho-beta-D-ribosylamino)methylideneamino]imidazole-4-carboxamide. The protein operates within amino-acid biosynthesis; L-histidine biosynthesis; L-histidine from 5-phospho-alpha-D-ribose 1-diphosphate: step 3/9. Catalyzes the hydrolysis of the adenine ring of phosphoribosyl-AMP. The protein is Phosphoribosyl-AMP cyclohydrolase of Marinobacter nauticus (strain ATCC 700491 / DSM 11845 / VT8) (Marinobacter aquaeolei).